A 728-amino-acid chain; its full sequence is Beta-galactosidase 12 (728 aa).

Residues 1–27 (MGLNFREKAWILLGILCCSSLICSVKA) form the signal peptide. Residue Glu-185 is the Proton donor of the active site. Glu-254 serves as the catalytic Nucleophile. N-linked (GlcNAc...) asparagine glycosylation is found at Asn-255, Asn-380, and Asn-450.

It belongs to the glycosyl hydrolase 35 family. Ubiquitous, with higher expression levels in roots and siliques.

It localises to the secreted. The protein localises to the extracellular space. It is found in the apoplast. It carries out the reaction Hydrolysis of terminal non-reducing beta-D-galactose residues in beta-D-galactosides.. The protein is Beta-galactosidase 12 (BGAL12) of Arabidopsis thaliana (Mouse-ear cress).